Here is a 172-residue protein sequence, read N- to C-terminus: Adenine phosphoribosyltransferase (172 aa).

Belongs to the purine/pyrimidine phosphoribosyltransferase family. In terms of assembly, homodimer.

Its subcellular location is the cytoplasm. It catalyses the reaction AMP + diphosphate = 5-phospho-alpha-D-ribose 1-diphosphate + adenine. It functions in the pathway purine metabolism; AMP biosynthesis via salvage pathway; AMP from adenine: step 1/1. Functionally, catalyzes a salvage reaction resulting in the formation of AMP, that is energically less costly than de novo synthesis. This Synechococcus sp. (strain CC9311) protein is Adenine phosphoribosyltransferase.